The following is a 175-amino-acid chain: MEKKRRARINVSLEQLRSLLERHYSHQIRKRKLEKADILELSVKYMRSLQNSLQGLWPVPSGVDYPSGFQGGLRGVSQRLRPGEGDSGLRCPLLLQRREGSTTDSANPQATSVLNPCLPAIWAPSRAAGGSHSPQSPLPLPGGLLESSTDVVAPHPASNCQAESTRPGFRVWRPW.

The bHLH domain occupies 1–49 (MEKKRRARINVSLEQLRSLLERHYSHQIRKRKLEKADILELSVKYMRSL). The Orange domain maps to 65–98 (YPSGFQGGLRGVSQRLRPGEGDSGLRCPLLLQRR). The disordered stretch occupies residues 126–166 (RAAGGSHSPQSPLPLPGGLLESSTDVVAPHPASNCQAESTR). The segment covering 129–148 (GGSHSPQSPLPLPGGLLESS) has biased composition (low complexity). Positions 172–175 (WRPW) match the WRPW motif motif.

As to quaternary structure, transcription repression requires formation of a complex with a corepressor protein of the Groucho/TLE family.

The protein localises to the nucleus. Its function is as follows. Transcriptional repressor of genes that require a bHLH protein for their transcription. This is Transcription factor HES-3 (Hes3) from Mus musculus (Mouse).